The chain runs to 101 residues: Protein RnfH (101 aa).

It belongs to the UPF0125 (RnfH) family.

The sequence is that of Protein RnfH from Pseudomonas aeruginosa (strain UCBPP-PA14).